Consider the following 102-residue polypeptide: Flagellar hook-basal body complex protein FliE (102 aa).

Belongs to the FliE family.

The protein localises to the bacterial flagellum basal body. This chain is Flagellar hook-basal body complex protein FliE, found in Oceanobacillus iheyensis (strain DSM 14371 / CIP 107618 / JCM 11309 / KCTC 3954 / HTE831).